A 251-amino-acid polypeptide reads, in one-letter code: 5-oxoprolinase subunit A (251 aa).

It belongs to the LamB/PxpA family. In terms of assembly, forms a complex composed of PxpA, PxpB and PxpC.

It catalyses the reaction 5-oxo-L-proline + ATP + 2 H2O = L-glutamate + ADP + phosphate + H(+). Functionally, catalyzes the cleavage of 5-oxoproline to form L-glutamate coupled to the hydrolysis of ATP to ADP and inorganic phosphate. This is 5-oxoprolinase subunit A from Paracidovorax citrulli (strain AAC00-1) (Acidovorax citrulli).